A 304-amino-acid polypeptide reads, in one-letter code: UDP-N-acetylenolpyruvoylglucosamine reductase (304 aa).

One can recognise an FAD-binding PCMH-type domain in the interval 31–196 (KVGGPADYLA…ISAKFNLKPG (166 aa)). Arg175 is a catalytic residue. Ser225 serves as the catalytic Proton donor. Residue Glu295 is part of the active site.

Belongs to the MurB family. Requires FAD as cofactor.

It localises to the cytoplasm. The catalysed reaction is UDP-N-acetyl-alpha-D-muramate + NADP(+) = UDP-N-acetyl-3-O-(1-carboxyvinyl)-alpha-D-glucosamine + NADPH + H(+). It participates in cell wall biogenesis; peptidoglycan biosynthesis. Cell wall formation. The sequence is that of UDP-N-acetylenolpyruvoylglucosamine reductase from Streptococcus thermophilus (strain ATCC BAA-491 / LMD-9).